An 89-amino-acid polypeptide reads, in one-letter code: Small ribosomal subunit protein uS15 (89 aa).

This sequence belongs to the universal ribosomal protein uS15 family. As to quaternary structure, part of the 30S ribosomal subunit. Forms a bridge to the 50S subunit in the 70S ribosome, contacting the 23S rRNA.

One of the primary rRNA binding proteins, it binds directly to 16S rRNA where it helps nucleate assembly of the platform of the 30S subunit by binding and bridging several RNA helices of the 16S rRNA. In terms of biological role, forms an intersubunit bridge (bridge B4) with the 23S rRNA of the 50S subunit in the ribosome. In Trichormus variabilis (strain ATCC 29413 / PCC 7937) (Anabaena variabilis), this protein is Small ribosomal subunit protein uS15.